We begin with the raw amino-acid sequence, 156 residues long: Putative type II restriction enzyme ApeKORF2002P (156 aa).

This sequence to M.jannaschii MJ1199.

It carries out the reaction Endonucleolytic cleavage of DNA to give specific double-stranded fragments with terminal 5'-phosphates.. Functionally, a putative type II restriction enzyme, its methylase would be APE_2002. This Aeropyrum pernix (strain ATCC 700893 / DSM 11879 / JCM 9820 / NBRC 100138 / K1) protein is Putative type II restriction enzyme ApeKORF2002P.